Reading from the N-terminus, the 982-residue chain is Glycine dehydrogenase (decarboxylating) (982 aa).

N6-(pyridoxal phosphate)lysine is present on lysine 729.

This sequence belongs to the GcvP family. The glycine cleavage system is composed of four proteins: P, T, L and H. Pyridoxal 5'-phosphate serves as cofactor.

It carries out the reaction N(6)-[(R)-lipoyl]-L-lysyl-[glycine-cleavage complex H protein] + glycine + H(+) = N(6)-[(R)-S(8)-aminomethyldihydrolipoyl]-L-lysyl-[glycine-cleavage complex H protein] + CO2. In terms of biological role, the glycine cleavage system catalyzes the degradation of glycine. The P protein binds the alpha-amino group of glycine through its pyridoxal phosphate cofactor; CO(2) is released and the remaining methylamine moiety is then transferred to the lipoamide cofactor of the H protein. The protein is Glycine dehydrogenase (decarboxylating) of Ralstonia nicotianae (strain ATCC BAA-1114 / GMI1000) (Ralstonia solanacearum).